The following is a 323-amino-acid chain: D-alanine--D-alanine ligase (323 aa).

In terms of domain architecture, ATP-grasp spans 120-319 (LSVLKPYGIK…LEDLFTNAIE (200 aa)). 148–203 (VKKVGLPCFVKPNKAGSSFGISKVKSEAELPIAIEVAYKEDNEIIIESFLDGTEVS) provides a ligand contact to ATP. Mg(2+) is bound by residues Glu274, Glu286, and Asn288.

This sequence belongs to the D-alanine--D-alanine ligase family. Mg(2+) serves as cofactor. Mn(2+) is required as a cofactor.

It localises to the cytoplasm. The enzyme catalyses 2 D-alanine + ATP = D-alanyl-D-alanine + ADP + phosphate + H(+). Its pathway is cell wall biogenesis; peptidoglycan biosynthesis. Its function is as follows. Cell wall formation. This is D-alanine--D-alanine ligase from Flavobacterium johnsoniae (strain ATCC 17061 / DSM 2064 / JCM 8514 / BCRC 14874 / CCUG 350202 / NBRC 14942 / NCIMB 11054 / UW101) (Cytophaga johnsonae).